We begin with the raw amino-acid sequence, 318 residues long: NADH-ubiquinone oxidoreductase chain 1 (318 aa).

A run of 8 helical transmembrane segments spans residues 3–23, 69–89, 102–122, 144–164, 171–191, 222–242, 253–273, and 294–314; these read LINLLAMIVPVLLAVAFLTLL, MLFIIAPTLALTLALTMWTPL, MLFILALSSLAVYTIMWSGWA, VTLAIIILSLLLMNGSFTLLS, YIWLLIPSWPLAMMWFISTLA, LFFLAEYANIIMMNALTIILF, ELYTINFTIKTLLFTAFFLWI, and LPLTLVMCMWHVALPIMLAGI.

It belongs to the complex I subunit 1 family. Core subunit of respiratory chain NADH dehydrogenase (Complex I) which is composed of 45 different subunits.

The protein resides in the mitochondrion inner membrane. The catalysed reaction is a ubiquinone + NADH + 5 H(+)(in) = a ubiquinol + NAD(+) + 4 H(+)(out). Its function is as follows. Core subunit of the mitochondrial membrane respiratory chain NADH dehydrogenase (Complex I) which catalyzes electron transfer from NADH through the respiratory chain, using ubiquinone as an electron acceptor. Essential for the catalytic activity and assembly of complex I. This chain is NADH-ubiquinone oxidoreductase chain 1 (MT-ND1), found in Murina suilla (Brown tube-nosed bat).